The primary structure comprises 335 residues: DNA polymerase beta (335 aa).

A Glycyl lysine isopeptide (Lys-Gly) (interchain with G-Cter in ubiquitin) cross-link involves residue K41. K60 is a binding site for K(+). K60 is a binding site for Na(+). K61 is covalently cross-linked (Glycyl lysine isopeptide (Lys-Gly) (interchain with G-Cter in ubiquitin)). The K(+) site is built by L62 and V65. Residues L62 and V65 each contribute to the Na(+) site. K72 acts as the Nucleophile; Schiff-base intermediate with DNA; for 5'-dRP lyase activity in catalysis. N6-acetyllysine is present on K72. A Glycyl lysine isopeptide (Lys-Gly) (interchain with G-Cter in ubiquitin) cross-link involves residue K81. At R83 the chain carries Omega-N-methylarginine; by PRMT6. K(+) contacts are provided by T101, V103, and I106. Na(+) contacts are provided by T101, V103, and I106. Residue R149 participates in a 2'-deoxyribonucleoside 5'-triphosphate binding. The residue at position 152 (R152) is an Omega-N-methylarginine; by PRMT6. S180, R183, G189, and D190 together coordinate a 2'-deoxyribonucleoside 5'-triphosphate. The DNA-binding stretch occupies residues R183–D192. Mg(2+) is bound by residues D190, D192, and D256.

This sequence belongs to the DNA polymerase type-X family. Monomer. Binds single-stranded DNA (ssDNA). Interacts with APEX1, LIG1, LIG3, FEN1, PCNA and XRCC1. Interacts with HUWE1/ARF-BP1, STUB1/CHIP and USP47. Interacts with FAM168A. Mg(2+) is required as a cofactor. In terms of processing, methylation by PRMT6 stimulates the polymerase activity by enhancing DNA binding and processivity. Ubiquitinated at Lys-41, Lys-61 and Lys-81: monoubiquitinated by HUWE1/ARF-BP1. Monoubiquitinated protein is then the target of STUB1/CHIP, which catalyzes polyubiquitination from monoubiquitin, leading to degradation by the proteasome. USP47 mediates the deubiquitination of monoubiquitinated protein, preventing polyubiquitination by STUB1/CHIP and its subsequent degradation.

The protein resides in the nucleus. It is found in the cytoplasm. It carries out the reaction DNA(n) + a 2'-deoxyribonucleoside 5'-triphosphate = DNA(n+1) + diphosphate. The catalysed reaction is a 5'-end 2'-deoxyribose-2'-deoxyribonucleotide-DNA = (2E,4S)-4-hydroxypenten-2-al-5-phosphate + a 5'-end 5'-phospho-2'-deoxyribonucleoside-DNA + H(+). The enzyme catalyses 2'-deoxyribonucleotide-(2'-deoxyribose 5'-phosphate)-2'-deoxyribonucleotide-DNA = a 3'-end 2'-deoxyribonucleotide-(2,3-dehydro-2,3-deoxyribose 5'-phosphate)-DNA + a 5'-end 5'-phospho-2'-deoxyribonucleoside-DNA + H(+). Functionally, repair polymerase that plays a key role in base-excision repair. During this process, the damaged base is excised by specific DNA glycosylases, the DNA backbone is nicked at the abasic site by an apurinic/apyrimidic (AP) endonuclease, and POLB removes 5'-deoxyribose-phosphate from the preincised AP site acting as a 5'-deoxyribose-phosphate lyase (5'-dRP lyase); through its DNA polymerase activity, it adds one nucleotide to the 3' end of the arising single-nucleotide gap. Conducts 'gap-filling' DNA synthesis in a stepwise distributive fashion rather than in a processive fashion as for other DNA polymerases. It is also able to cleave sugar-phosphate bonds 3' to an intact AP site, acting as an AP lyase. The sequence is that of DNA polymerase beta (Polb) from Mus musculus (Mouse).